The chain runs to 93 residues: Small ribosomal subunit protein uS19 (93 aa).

The protein belongs to the universal ribosomal protein uS19 family.

In terms of biological role, protein S19 forms a complex with S13 that binds strongly to the 16S ribosomal RNA. This chain is Small ribosomal subunit protein uS19, found in Oenococcus oeni (strain ATCC BAA-331 / PSU-1).